Consider the following 740-residue polypeptide: ATP-dependent RNA helicase DDX1 (740 aa).

Residues 1–295 form a necessary for interaction with HNRNPK region; that stretch reads MAAFSEMGVM…APKALIVEPS (295 aa). The segment at 1 to 448 is interaction with dsRNA; it reads MAAFSEMGVM…DTVHHVVVPV (448 aa). The necessary for interaction with RELA stretch occupies residues 1-525; it reads MAAFSEMGVM…KIDCDNLEQY (525 aa). A Helicase ATP-binding domain is found at 2 to 428; that stretch reads AAFSEMGVMP…SEKIMHFPTW (427 aa). Residue 46-53 coordinates ATP; it reads AETGSGKT. The 178-residue stretch at 70 to 247 folds into the B30.2/SPRY domain; that stretch reads DQQEGKKGKA…LKFNFGEEEF (178 aa). N6-acetyllysine is present on residues K239 and K268. K281 carries the N6-acetyllysine; alternate modification. K281 is covalently cross-linked (Glycyl lysine isopeptide (Lys-Gly) (interchain with G-Cter in SUMO2); alternate). Positions 370–373 match the DEAD box motif; the sequence is DEAD. S481 bears the Phosphoserine mark. The Helicase C-terminal domain maps to 493 to 681; sequence KGEYAVRAIK…QVEPDIKVPV (189 aa). Residues 525-740 form a necessary for interaction with HNRNPK region; sequence YFMQQGGGPD…YLPNQLFRTF (216 aa).

The protein belongs to the DEAD box helicase family. DDX1 subfamily. In terms of assembly, found in a multi-helicase-TICAM1 complex at least composed of DHX36, DDX1, DDX21 and TICAM1; this complex exists in resting cells with or without poly(I:C) RNA ligand stimulation. Interacts with DHX36. Interacts (via B30.2/SPRY domain) with DDX21 (via N-terminus); this interaction serves as bridges to TICAM1. Interacts with FAM98A (via N- and C-terminus). Interacts with PHF5A (via C-terminus). Interacts with MBNL1. Interacts with CSTF2. Interacts with HNRNPK. Interacts with ATM. Interacts with RELA (via C-terminus). Component of the tRNA-splicing ligase complex. Interacts with PQBP1. Interacts with ERCC6. Phosphorylated by ATM kinase; phosphorylation is increased in response to ionizing radiation (IR).

It localises to the nucleus. The protein resides in the cytoplasm. It is found in the cytoplasmic granule. The protein localises to the cytosol. Its subcellular location is the mitochondrion. It carries out the reaction ATP + H2O = ADP + phosphate + H(+). Acts as an ATP-dependent RNA helicase, able to unwind both RNA-RNA and RNA-DNA duplexes. Possesses 5' single-stranded RNA overhang nuclease activity. Possesses ATPase activity on various RNA, but not DNA polynucleotides. May play a role in RNA clearance at DNA double-strand breaks (DSBs), thereby facilitating the template-guided repair of transcriptionally active regions of the genome. Together with RELA, acts as a coactivator to enhance NF-kappa-B-mediated transcriptional activation. Acts as a positive transcriptional regulator of cyclin CCND2 expression. Binds to the cyclin CCND2 promoter region. Associates with chromatin at the NF-kappa-B promoter region via association with RELA. Binds to poly(A) RNA. May be involved in 3'-end cleavage and polyadenylation of pre-mRNAs. Component of the tRNA-splicing ligase complex required to facilitate the enzymatic turnover of catalytic subunit RTCB: together with archease (ZBTB8OS), acts by facilitating the guanylylation of RTCB, a key intermediate step in tRNA ligation. Component of a multi-helicase-TICAM1 complex that acts as a cytoplasmic sensor of viral double-stranded RNA (dsRNA) and plays a role in the activation of a cascade of antiviral responses including the induction of pro-inflammatory cytokines via the adapter molecule TICAM1. Specifically binds (via helicase ATP-binding domain) on both short and long poly(I:C) dsRNA. This is ATP-dependent RNA helicase DDX1 (DDX1) from Bos taurus (Bovine).